A 514-amino-acid chain; its full sequence is 1-pyrroline-5-carboxylate dehydrogenase (514 aa).

Catalysis depends on residues glutamate 286 and cysteine 320.

Belongs to the aldehyde dehydrogenase family. RocA subfamily.

The enzyme catalyses L-glutamate 5-semialdehyde + NAD(+) + H2O = L-glutamate + NADH + 2 H(+). It participates in amino-acid degradation; L-proline degradation into L-glutamate; L-glutamate from L-proline: step 2/2. The protein is 1-pyrroline-5-carboxylate dehydrogenase of Staphylococcus aureus (strain MW2).